We begin with the raw amino-acid sequence, 107 residues long: U1-lycotoxin-Ls1c (107 aa).

The signal sequence occupies residues 1–20; it reads MMKVLVVVALLVTLISYSSS. Positions 21-41 are excised as a propeptide; that stretch reads EGIDDLEADELLSLMANEQTR. 4 cysteine pairs are disulfide-bonded: Cys44–Cys59, Cys51–Cys68, Cys58–Cys86, and Cys70–Cys84.

Belongs to the neurotoxin 19 (CSTX) family. 04 (U1-Lctx) subfamily. In terms of tissue distribution, expressed by the venom gland.

It is found in the secreted. The sequence is that of U1-lycotoxin-Ls1c from Lycosa singoriensis (Wolf spider).